The chain runs to 235 residues: 5'-methylthioadenosine/S-adenosylhomocysteine nucleosidase (235 aa).

The Proton acceptor role is filled by Glu-13. Substrate contacts are provided by residues Gly-79, Met-154, and 175–176; that span reads ME. The active-site Proton donor is the Asp-199.

It belongs to the PNP/UDP phosphorylase family. MtnN subfamily.

It carries out the reaction S-adenosyl-L-homocysteine + H2O = S-(5-deoxy-D-ribos-5-yl)-L-homocysteine + adenine. The enzyme catalyses S-methyl-5'-thioadenosine + H2O = 5-(methylsulfanyl)-D-ribose + adenine. It catalyses the reaction 5'-deoxyadenosine + H2O = 5-deoxy-D-ribose + adenine. It functions in the pathway amino-acid biosynthesis; L-methionine biosynthesis via salvage pathway; S-methyl-5-thio-alpha-D-ribose 1-phosphate from S-methyl-5'-thioadenosine (hydrolase route): step 1/2. Catalyzes the irreversible cleavage of the glycosidic bond in both 5'-methylthioadenosine (MTA) and S-adenosylhomocysteine (SAH/AdoHcy) to adenine and the corresponding thioribose, 5'-methylthioribose and S-ribosylhomocysteine, respectively. Also cleaves 5'-deoxyadenosine, a toxic by-product of radical S-adenosylmethionine (SAM) enzymes, into 5-deoxyribose and adenine. The protein is 5'-methylthioadenosine/S-adenosylhomocysteine nucleosidase of Chromohalobacter salexigens (strain ATCC BAA-138 / DSM 3043 / CIP 106854 / NCIMB 13768 / 1H11).